The chain runs to 263 residues: Endonuclease 8 (263 aa).

The Schiff-base intermediate with DNA role is filled by Pro2. Glu3 functions as the Proton donor in the catalytic mechanism. Catalysis depends on Lys53, which acts as the Proton donor; for beta-elimination activity. 3 residues coordinate DNA: Gln70, Arg125, and Asn169. The segment at 229–263 (KVFHRDGEPCERCGSIIEKTTLSSRPFYWCPGCQH) adopts an FPG-type zinc-finger fold. Arg253 acts as the Proton donor; for delta-elimination activity in catalysis.

It belongs to the FPG family. Zn(2+) is required as a cofactor.

It carries out the reaction 2'-deoxyribonucleotide-(2'-deoxyribose 5'-phosphate)-2'-deoxyribonucleotide-DNA = a 3'-end 2'-deoxyribonucleotide-(2,3-dehydro-2,3-deoxyribose 5'-phosphate)-DNA + a 5'-end 5'-phospho-2'-deoxyribonucleoside-DNA + H(+). In terms of biological role, involved in base excision repair of DNA damaged by oxidation or by mutagenic agents. Acts as a DNA glycosylase that recognizes and removes damaged bases. Has a preference for oxidized pyrimidines, such as thymine glycol, 5,6-dihydrouracil and 5,6-dihydrothymine. Has AP (apurinic/apyrimidinic) lyase activity and introduces nicks in the DNA strand. Cleaves the DNA backbone by beta-delta elimination to generate a single-strand break at the site of the removed base with both 3'- and 5'-phosphates. The chain is Endonuclease 8 from Escherichia coli (strain K12 / MC4100 / BW2952).